The primary structure comprises 127 residues: MLAPEHRLRSSALFSTVVKKGARKGSRTLVVHLWTPEPGPDAPLELTGGPRAGLIVSKAVGNAVVRHAVSRKLRAVLATIIDEDATAASPQLQETSFVVVRALPGSAEASSKELESDVRRCLSRLSR.

Belongs to the RnpA family. Consists of a catalytic RNA component (M1 or rnpB) and a protein subunit.

The catalysed reaction is Endonucleolytic cleavage of RNA, removing 5'-extranucleotides from tRNA precursor.. Its function is as follows. RNaseP catalyzes the removal of the 5'-leader sequence from pre-tRNA to produce the mature 5'-terminus. It can also cleave other RNA substrates such as 4.5S RNA. The protein component plays an auxiliary but essential role in vivo by binding to the 5'-leader sequence and broadening the substrate specificity of the ribozyme. The protein is Ribonuclease P protein component of Corynebacterium urealyticum (strain ATCC 43042 / DSM 7109).